The chain runs to 101 residues: Small ribosomal subunit protein uS14 (101 aa).

Belongs to the universal ribosomal protein uS14 family. As to quaternary structure, part of the 30S ribosomal subunit. Contacts proteins S3 and S10.

Binds 16S rRNA, required for the assembly of 30S particles and may also be responsible for determining the conformation of the 16S rRNA at the A site. In Leifsonia xyli subsp. xyli (strain CTCB07), this protein is Small ribosomal subunit protein uS14.